Reading from the N-terminus, the 268-residue chain is Gasdermin bGSDM (268 aa).

Cys-3 carries the S-palmitoyl cysteine lipid modification. Transmembrane regions (beta stranded) follow at residues 78-94, 103-121, 168-185, and 195-211; these read IDLR…AAKI, APSF…FHIE, KMRM…GVDV, and AKLE…RLVF. Residues 248-268 are C-terminal region; it reads GENMALNLFTEIQDAGFIEVT.

The protein belongs to the bacterial gasdermin family. Monomer in solution. As to quaternary structure, forms large, homooligomeric ring-shaped pores when inserted in membranes. Post-translationally, cleavage by the adjacently encoded protease (G563DRAFT_02009) between Leu-247 and Gly-248 relieves autoinhibition, releasing the N-terminus which initiates loss of cell integrity. In terms of processing, palmitoylation helps stabilize the inactive state; may self-palmitoylate. Palmitoylation is not required for permeabilization of liposomes by the ring-like pores in vitro. Palmitoylation plays a significant role in pore formation.

It is found in the cytoplasm. Its subcellular location is the cell inner membrane. With respect to regulation, the full-length protein before cleavage is inactive: intramolecular interactions between the N-terminal domain and the C-terminal region, as well as the lipid modification, mediate autoinhibition. The pyroptosis-like-inducing activity is carried by the released N-terminal domain (gasdermin bGSDM, N-terminus). Its function is as follows. Precursor of a pore-forming protein involved in defense against bacteriophages. Cleavage of this precursor by its dedicated, neighboring protease (G563DRAFT_02009) releases the active moiety (gasdermin bGSDM, N-terminus) which inserts into membranes, forming pores and triggering cell death. Expression of bGSDM and its protease is highly toxic in E.coli. Cells expressing the gene pair stop dividing and lose membrane integrity. Both proteins are required to kill E.coli. Functionally, pore-forming protein that causes membrane permeabilization via a pyroptosis-like activity. Makes ring-like pores with walls about 50 Angstroms thick and an interior pore diameter of 200-300 Angstroms, when integrated in liposomes. The chain is Gasdermin bGSDM from Runella zeae (strain ATCC BAA-293 / DSM 19591 / LMG 21438 / NS12).